A 512-amino-acid polypeptide reads, in one-letter code: Putative ribose/galactose/methyl galactoside import ATP-binding protein 1 (512 aa).

ABC transporter domains follow at residues 14-251 (IALT…VGRQ) and 262-507 (TSAN…TQRE). Position 46–53 (46–53 (GENGAGKS)) interacts with ATP.

The protein belongs to the ABC transporter superfamily. Carbohydrate importer 2 (CUT2) (TC 3.A.1.2) family.

It is found in the cell inner membrane. It catalyses the reaction D-ribose(out) + ATP + H2O = D-ribose(in) + ADP + phosphate + H(+). The enzyme catalyses D-galactose(out) + ATP + H2O = D-galactose(in) + ADP + phosphate + H(+). In terms of biological role, part of an ABC transporter complex involved in carbohydrate import. Could be involved in ribose, galactose and/or methyl galactoside import. Responsible for energy coupling to the transport system. The polypeptide is Putative ribose/galactose/methyl galactoside import ATP-binding protein 1 (Burkholderia lata (strain ATCC 17760 / DSM 23089 / LMG 22485 / NCIMB 9086 / R18194 / 383)).